The primary structure comprises 89 residues: Exodeoxyribonuclease 7 small subunit (89 aa).

Positions 1-23 (MRPWRCVSMAKAPAAPSSTQPDP) are disordered.

Belongs to the XseB family. As to quaternary structure, heterooligomer composed of large and small subunits.

The protein resides in the cytoplasm. It carries out the reaction Exonucleolytic cleavage in either 5'- to 3'- or 3'- to 5'-direction to yield nucleoside 5'-phosphates.. In terms of biological role, bidirectionally degrades single-stranded DNA into large acid-insoluble oligonucleotides, which are then degraded further into small acid-soluble oligonucleotides. The chain is Exodeoxyribonuclease 7 small subunit from Acidovorax sp. (strain JS42).